Consider the following 477-residue polypeptide: tRNA-2-methylthio-N(6)-dimethylallyladenosine synthase (477 aa).

In terms of domain architecture, MTTase N-terminal spans 13 to 130 (GGLFIKTYGC…LPAMIEEALA (118 aa)). [4Fe-4S] cluster-binding residues include C22, C59, C93, C178, C182, and C185. A Radical SAM core domain is found at 164 to 396 (ESNGVSAFVS…QAMLNEQTAA (233 aa)). The TRAM domain occupies 399–462 (EGMVGTTQRV…ANSLKGKLVA (64 aa)).

It belongs to the methylthiotransferase family. MiaB subfamily. As to quaternary structure, monomer. [4Fe-4S] cluster serves as cofactor.

It is found in the cytoplasm. It carries out the reaction N(6)-dimethylallyladenosine(37) in tRNA + (sulfur carrier)-SH + AH2 + 2 S-adenosyl-L-methionine = 2-methylsulfanyl-N(6)-dimethylallyladenosine(37) in tRNA + (sulfur carrier)-H + 5'-deoxyadenosine + L-methionine + A + S-adenosyl-L-homocysteine + 2 H(+). Its function is as follows. Catalyzes the methylthiolation of N6-(dimethylallyl)adenosine (i(6)A), leading to the formation of 2-methylthio-N6-(dimethylallyl)adenosine (ms(2)i(6)A) at position 37 in tRNAs that read codons beginning with uridine. This chain is tRNA-2-methylthio-N(6)-dimethylallyladenosine synthase, found in Hydrogenovibrio crunogenus (strain DSM 25203 / XCL-2) (Thiomicrospira crunogena).